Here is a 185-residue protein sequence, read N- to C-terminus: ATP-dependent protease subunit HslV (185 aa).

Residue Thr-12 is part of the active site. Residues Ala-168, Cys-171, and Thr-174 each contribute to the Na(+) site.

This sequence belongs to the peptidase T1B family. HslV subfamily. As to quaternary structure, a double ring-shaped homohexamer of HslV is capped on each side by a ring-shaped HslU homohexamer. The assembly of the HslU/HslV complex is dependent on binding of ATP.

Its subcellular location is the cytoplasm. The catalysed reaction is ATP-dependent cleavage of peptide bonds with broad specificity.. Its activity is regulated as follows. Allosterically activated by HslU binding. Protease subunit of a proteasome-like degradation complex believed to be a general protein degrading machinery. In Dinoroseobacter shibae (strain DSM 16493 / NCIMB 14021 / DFL 12), this protein is ATP-dependent protease subunit HslV.